Consider the following 100-residue polypeptide: Large ribosomal subunit protein uL23 (100 aa).

Belongs to the universal ribosomal protein uL23 family. In terms of assembly, part of the 50S ribosomal subunit. Contacts protein L29, and trigger factor when it is bound to the ribosome.

One of the early assembly proteins it binds 23S rRNA. One of the proteins that surrounds the polypeptide exit tunnel on the outside of the ribosome. Forms the main docking site for trigger factor binding to the ribosome. This is Large ribosomal subunit protein uL23 from Prochlorococcus marinus (strain MIT 9215).